The primary structure comprises 396 residues: Decapping nuclease RAI1 (396 aa).

107–109 (YRG) serves as a coordination point for substrate. E179 is a binding site for a divalent metal cation. Position 228 (E228) interacts with substrate. Residues D230, E249, and L250 each coordinate a divalent metal cation. 2 residues coordinate substrate: K251 and Q275.

The protein belongs to the DXO/Dom3Z family. As to quaternary structure, interacts with RAT1; the interaction is direct, stabilizes RAT1 protein structure and stimulates its exoribonuclease activity. The interaction also stimulates RAI1 pyrophosphohydrolase activity, probably by recruiting it to mRNA substrates. A divalent metal cation is required as a cofactor.

The protein localises to the nucleus. It catalyses the reaction a 5'-end NAD(+)-phospho-ribonucleoside in mRNA + H2O = a 5'-end phospho-ribonucleoside in mRNA + NAD(+) + H(+). The enzyme catalyses a 5'-end (N(7)-methyl 5'-triphosphoguanosine)-ribonucleoside-ribonucleotide in mRNA + H2O = a (N(7)-methyl 5'-triphosphoguanosine)-nucleoside + a 5'-end phospho-ribonucleoside in mRNA + H(+). It carries out the reaction a 5'-end triphospho-ribonucleoside in mRNA + H2O = a 5'-end phospho-ribonucleoside in mRNA + diphosphate + H(+). Functionally, decapping enzyme for NAD-capped RNAs: specifically hydrolyzes the nicotinamide adenine dinucleotide (NAD) cap from a subset of RNAs by removing the entire NAD moiety from the 5'-end of an NAD-capped RNA. The NAD-cap is present at the 5'-end of some RNAs and snoRNAs. In contrast to the canonical 5'-end N7 methylguanosine (m7G) cap, the NAD cap promotes mRNA decay. Also acts as a non-canonical decapping enzyme that removes the entire cap structure of m7G capped or incompletely capped RNAs. Has decapping activity toward incomplete 5'-end m7G cap mRNAs such as unmethylated 5'-end-capped RNA (cap0), while it has no activity toward 2'-O-ribose methylated m7G cap (cap1). Also possesses RNA 5'-pyrophosphohydrolase activity by hydrolyzing the 5'-end triphosphate to release pyrophosphates. Stimulates exoribonuclease activity of Rat1, allowing it to degrade RNAs with stable secondary structure more effectively. This is Decapping nuclease RAI1 from Scheffersomyces stipitis (strain ATCC 58785 / CBS 6054 / NBRC 10063 / NRRL Y-11545) (Yeast).